Consider the following 259-residue polypeptide: Deoxyribose-phosphate aldolase (259 aa).

The active-site Proton donor/acceptor is aspartate 102. Residue lysine 167 is the Schiff-base intermediate with acetaldehyde of the active site. The active-site Proton donor/acceptor is the lysine 201.

This sequence belongs to the DeoC/FbaB aldolase family. DeoC type 2 subfamily.

Its subcellular location is the cytoplasm. The catalysed reaction is 2-deoxy-D-ribose 5-phosphate = D-glyceraldehyde 3-phosphate + acetaldehyde. The protein operates within carbohydrate degradation; 2-deoxy-D-ribose 1-phosphate degradation; D-glyceraldehyde 3-phosphate and acetaldehyde from 2-deoxy-alpha-D-ribose 1-phosphate: step 2/2. Its function is as follows. Catalyzes a reversible aldol reaction between acetaldehyde and D-glyceraldehyde 3-phosphate to generate 2-deoxy-D-ribose 5-phosphate. The protein is Deoxyribose-phosphate aldolase of Escherichia fergusonii (strain ATCC 35469 / DSM 13698 / CCUG 18766 / IAM 14443 / JCM 21226 / LMG 7866 / NBRC 102419 / NCTC 12128 / CDC 0568-73).